Consider the following 536-residue polypeptide: uncharacterized protein (536 aa).

The Cytoplasmic segment spans residues 1–8 (MVSIKRYE). Residues 9-29 (IISFVIAAFFFLSGLSMWIAF) form a helical membrane-spanning segment. Over 30-502 (WPIFNSELRS…VWLGVIIVPR (473 aa)) the chain is Extracellular. 4 N-linked (GlcNAc...) asparagine glycosylation sites follow: Asn73, Asn236, Asn363, and Asn376. A helical transmembrane segment spans residues 503 to 523 (IIEYLKFVLIFISICILTTLL). The Cytoplasmic portion of the chain corresponds to 524 to 536 (VIRVRVKGTVSVV).

This sequence belongs to the CD36 family.

Its subcellular location is the membrane. This is an uncharacterized protein from Caenorhabditis elegans.